Reading from the N-terminus, the 84-residue chain is Putative membrane protein insertion efficiency factor (84 aa).

Belongs to the UPF0161 family.

The protein resides in the cell inner membrane. Could be involved in insertion of integral membrane proteins into the membrane. This Nostoc sp. (strain PCC 7120 / SAG 25.82 / UTEX 2576) protein is Putative membrane protein insertion efficiency factor.